The chain runs to 142 residues: Ribosome-binding factor A (142 aa).

Positions 118-130 are enriched in basic and acidic residues; sequence DKAKQKQAGREDD. The disordered stretch occupies residues 118–142; that stretch reads DKAKQKQAGREDDTPSVDEQEKDTD. The segment covering 131–142 has biased composition (acidic residues); sequence TPSVDEQEKDTD.

It belongs to the RbfA family. In terms of assembly, monomer. Binds 30S ribosomal subunits, but not 50S ribosomal subunits or 70S ribosomes.

The protein localises to the cytoplasm. One of several proteins that assist in the late maturation steps of the functional core of the 30S ribosomal subunit. Associates with free 30S ribosomal subunits (but not with 30S subunits that are part of 70S ribosomes or polysomes). Required for efficient processing of 16S rRNA. May interact with the 5'-terminal helix region of 16S rRNA. The sequence is that of Ribosome-binding factor A from Shewanella denitrificans (strain OS217 / ATCC BAA-1090 / DSM 15013).